We begin with the raw amino-acid sequence, 563 residues long: MMISEKPLGVEESIRQDLEVLTVSRRLVKSVSQKLKKKIHKTEVVEDEEIARGAVNCLSISVGCRVADTGEDFEDSSNKRWSSASEEGKGLMTICGTEETRLDCFSYGVRERFWKKNNRKYLADSGQDYRKHVYLPDDILEMCLMRLPLTSLLNAHLVCKKWQSMANTQRFLQMRREGSFQTPWLFLFAALKDGCSSGDIHGYDVSQDKWHRIETDLLKGRFMYSVTSIHEEIYIVGGRSMDRNSFKSHRGILVFSPSIKAWRKIASMRHARSLPIVGATEVTSEFSTMQTKQNRQDRRFHLSRVGGESDVYEDPHRLSVRRQNRNSADQNGTKSHRLIRQKLDRLNRNSSKRFVLIAIGGTGLFDEPLDSGEIYDSATNTWSEMQRLPMGFGVVSCGIICNGIFYAYSENDKLSGYDIERGFWITIQTSPIPPRVHEFYPKLVSCNHRLFMLSVSWCDEGDGQIGRRNKAVRKLWELDLVYLTWTEVSVHPDAPMDWNATYVSDQNILMGIEMFKIFGQVLSFFTVCDVLTEEASWRHVSRNQRSQKLNLSCTNKTIALLHL.

Residues 129 to 175 (YRKHVYLPDDILEMCLMRLPLTSLLNAHLVCKKWQSMANTQRFLQMR) enclose the F-box domain. Kelch repeat units follow at residues 184–231 (WLFL…SIHE), 232–282 (EIYI…ATEV), and 355–402 (VLIA…IICN).

The polypeptide is F-box/kelch-repeat protein At5g42350 (Arabidopsis thaliana (Mouse-ear cress)).